The following is a 424-amino-acid chain: Imidazolonepropionase (424 aa).

Fe(3+) is bound by residues His81 and His83. Zn(2+) is bound by residues His81 and His83. Residues Arg90, Tyr153, and His186 each contribute to the 4-imidazolone-5-propanoate site. Tyr153 serves as a coordination point for N-formimidoyl-L-glutamate. His251 serves as a coordination point for Fe(3+). Position 251 (His251) interacts with Zn(2+). Glu254 is a binding site for 4-imidazolone-5-propanoate. A Fe(3+)-binding site is contributed by Asp325. Asp325 contributes to the Zn(2+) binding site. 2 residues coordinate N-formimidoyl-L-glutamate: Asn327 and Gly329. 4-imidazolone-5-propanoate is bound at residue Thr330.

It belongs to the metallo-dependent hydrolases superfamily. HutI family. Zn(2+) is required as a cofactor. It depends on Fe(3+) as a cofactor.

The protein resides in the cytoplasm. It catalyses the reaction 4-imidazolone-5-propanoate + H2O = N-formimidoyl-L-glutamate. It participates in amino-acid degradation; L-histidine degradation into L-glutamate; N-formimidoyl-L-glutamate from L-histidine: step 3/3. In terms of biological role, catalyzes the hydrolytic cleavage of the carbon-nitrogen bond in imidazolone-5-propanoate to yield N-formimidoyl-L-glutamate. It is the third step in the universal histidine degradation pathway. In Syntrophobacter fumaroxidans (strain DSM 10017 / MPOB), this protein is Imidazolonepropionase.